We begin with the raw amino-acid sequence, 417 residues long: Phosphatidylcholine:ceramide cholinephosphotransferase 1 (417 aa).

The 64-residue stretch at 11–74 folds into the SAM domain; that stretch reads WSPEEVTNWL…LHMIETLKMA (64 aa). The next 5 helical transmembrane spans lie at 140 to 160, 188 to 208, 219 to 239, 280 to 300, and 308 to 328; these read FLAF…ISVV, FSIC…QWLL, FFCI…VTTL, MCGD…YLFI, and LWWY…CILL. H289 is an active-site residue. Residues 329-417 lie on the Cytoplasmic side of the membrane; it reads AHDHYTVDVV…VKYSRLVNDT (89 aa). Active-site residues include H332 and D336.

Belongs to the sphingomyelin synthase family.

It is found in the golgi apparatus membrane. The enzyme catalyses an N-acylsphing-4-enine + a 1,2-diacyl-sn-glycero-3-phosphocholine = a sphingomyelin + a 1,2-diacyl-sn-glycerol. It catalyses the reaction an N-acylsphing-4-enine + a 1,2-diacyl-sn-glycero-3-phosphoethanolamine = an N-acylsphing-4-enine 1-phosphoethanolamine + a 1,2-diacyl-sn-glycerol. Its function is as follows. Major sphingomyelin synthase at the Golgi apparatus. Catalyzes the reversible transfer of phosphocholine moiety in sphingomyelin biosynthesis: in the forward reaction transfers phosphocholine head group of phosphatidylcholine (PC) on to ceramide (CER) to form ceramide phosphocholine (sphingomyelin, SM) and diacylglycerol (DAG) as by-product, and in the reverse reaction transfers phosphocholine from SM to DAG to form PC and CER. The direction of the reaction depends on the levels of CER and DAG in Golgi membranes. Converts the newly synthesized CER, that is transported from the endoplasmic reticulum to the trans-Golgi by the Cer transport protein (CERT), to SM. Can form a heteromeric complex with glucosylceramide synthase (GCS) increasing SMS activity and reducing glucosylceramide synthesis, a critical mechanism that controls the metabolic fate of CER in the Golgi. Does not use free phosphorylcholine or CDP-choline as donor. Can also transfer phosphoethanolamine head group of phosphatidylethanolamine (PE) on to CER to form ceramide phosphoethanolamine (CPE). Regulates receptor-mediated signal transduction via mitogenic DAG and proapoptotic CER, as well as via SM, a structural component of membrane rafts that serve as platforms for signal transduction and protein sorting. Plays a role in secretory transport via regulation of DAG pool at the Golgi apparatus and its downstream effects on PRKD1. The polypeptide is Phosphatidylcholine:ceramide cholinephosphotransferase 1 (SGMS1) (Gallus gallus (Chicken)).